We begin with the raw amino-acid sequence, 433 residues long: Acetyl-CoA-benzylalcohol acetyltransferase (433 aa).

Active-site proton acceptor residues include His-152 and Asp-377.

It belongs to the plant acyltransferase family.

It catalyses the reaction benzyl alcohol + acetyl-CoA = benzyl acetate + CoA. The enzyme catalyses (E)-cinnamyl alcohol + acetyl-CoA = (E)-cinnamyl acetate + CoA. Its function is as follows. Involved in the biosynthesis of benzyl acetate, a major constituent of the floral scent. Can use benzylalcohol, cinnamylalcohol, 3-cis-hexene-1-ol or heptanol as substrates. Has some activity with 2-phenylethanol and 2-naphtalene-ethanol. This Clarkia breweri (Fairy fans) protein is Acetyl-CoA-benzylalcohol acetyltransferase (BEAT).